An 81-amino-acid chain; its full sequence is Acyl carrier protein (81 aa).

Residues 2–80 form the Carrier domain; sequence ASNEEILAGL…DAVSFIANAQ (79 aa). Residue Ser40 is modified to O-(pantetheine 4'-phosphoryl)serine.

The protein belongs to the acyl carrier protein (ACP) family. In terms of processing, 4'-phosphopantetheine is transferred from CoA to a specific serine of apo-ACP by AcpS. This modification is essential for activity because fatty acids are bound in thioester linkage to the sulfhydryl of the prosthetic group.

The protein localises to the cytoplasm. It participates in lipid metabolism; fatty acid biosynthesis. In terms of biological role, carrier of the growing fatty acid chain in fatty acid biosynthesis. The chain is Acyl carrier protein from Paenarthrobacter aurescens (strain TC1).